We begin with the raw amino-acid sequence, 426 residues long: Serine--tRNA ligase (426 aa).

228–230 contributes to the L-serine binding site; sequence TSE. ATP contacts are provided by residues 259–261 and V275; that span reads RRE. E282 lines the L-serine pocket. 346 to 349 contacts ATP; that stretch reads ELTS. T386 contributes to the L-serine binding site.

Belongs to the class-II aminoacyl-tRNA synthetase family. Type-1 seryl-tRNA synthetase subfamily. In terms of assembly, homodimer. The tRNA molecule binds across the dimer.

Its subcellular location is the cytoplasm. The catalysed reaction is tRNA(Ser) + L-serine + ATP = L-seryl-tRNA(Ser) + AMP + diphosphate + H(+). It carries out the reaction tRNA(Sec) + L-serine + ATP = L-seryl-tRNA(Sec) + AMP + diphosphate + H(+). It participates in aminoacyl-tRNA biosynthesis; selenocysteinyl-tRNA(Sec) biosynthesis; L-seryl-tRNA(Sec) from L-serine and tRNA(Sec): step 1/1. Catalyzes the attachment of serine to tRNA(Ser). Is also able to aminoacylate tRNA(Sec) with serine, to form the misacylated tRNA L-seryl-tRNA(Sec), which will be further converted into selenocysteinyl-tRNA(Sec). The chain is Serine--tRNA ligase from Arthrobacter sp. (strain FB24).